The chain runs to 101 residues: Large ribosomal subunit protein uL23 (101 aa).

It belongs to the universal ribosomal protein uL23 family. Part of the 50S ribosomal subunit. Contacts protein L29, and trigger factor when it is bound to the ribosome.

Its function is as follows. One of the early assembly proteins it binds 23S rRNA. One of the proteins that surrounds the polypeptide exit tunnel on the outside of the ribosome. Forms the main docking site for trigger factor binding to the ribosome. The chain is Large ribosomal subunit protein uL23 from Haemophilus ducreyi (strain 35000HP / ATCC 700724).